The chain runs to 505 residues: ATP synthase subunit alpha, chloroplastic (505 aa).

170–177 (GDRQTGKT) provides a ligand contact to ATP.

The protein belongs to the ATPase alpha/beta chains family. As to quaternary structure, F-type ATPases have 2 components, CF(1) - the catalytic core - and CF(0) - the membrane proton channel. CF(1) has five subunits: alpha(3), beta(3), gamma(1), delta(1), epsilon(1). CF(0) has four main subunits: a, b, b' and c.

Its subcellular location is the plastid. It localises to the chloroplast thylakoid membrane. It carries out the reaction ATP + H2O + 4 H(+)(in) = ADP + phosphate + 5 H(+)(out). Produces ATP from ADP in the presence of a proton gradient across the membrane. The alpha chain is a regulatory subunit. The protein is ATP synthase subunit alpha, chloroplastic of Zygnema circumcarinatum (Green alga).